Here is a 136-residue protein sequence, read N- to C-terminus: ATP synthase epsilon chain (136 aa).

The protein belongs to the ATPase epsilon chain family. F-type ATPases have 2 components, CF(1) - the catalytic core - and CF(0) - the membrane proton channel. CF(1) has five subunits: alpha(3), beta(3), gamma(1), delta(1), epsilon(1). CF(0) has three main subunits: a, b and c.

It is found in the cell inner membrane. Its function is as follows. Produces ATP from ADP in the presence of a proton gradient across the membrane. This is ATP synthase epsilon chain from Myxococcus xanthus (strain DK1622).